A 330-amino-acid polypeptide reads, in one-letter code: (4-{4-[2-(gamma-L-glutamylamino)ethyl]phenoxymethyl}furan-2-yl)methanamine synthase (330 aa).

This sequence belongs to the MfnF family.

It carries out the reaction gamma-L-glutamyltyramine + [5-(aminomethyl)furan-3-yl]methyl diphosphate = (4-{4-[2-(gamma-L-glutamylamino)ethyl]phenoxymethyl}furan-2-yl)methanamine + diphosphate. Its pathway is cofactor biosynthesis; methanofuran biosynthesis. Its function is as follows. Catalyzes the condensation between 5-(aminomethyl)-3-furanmethanol diphosphate (F1-PP) and gamma-glutamyltyramine to produce APMF-Glu. In Methanocaldococcus jannaschii (strain ATCC 43067 / DSM 2661 / JAL-1 / JCM 10045 / NBRC 100440) (Methanococcus jannaschii), this protein is (4-{4-[2-(gamma-L-glutamylamino)ethyl]phenoxymethyl}furan-2-yl)methanamine synthase.